A 326-amino-acid polypeptide reads, in one-letter code: Thioredoxin reductase (326 aa).

55-62 (EGPEPGGQ) is a binding site for FAD. A disulfide bridge connects residues Cys156 and Cys159. Position 298–307 (298–307 (DVSNKLYAQA)) interacts with FAD.

It belongs to the class-II pyridine nucleotide-disulfide oxidoreductase family. Homodimer. Requires FAD as cofactor.

Its subcellular location is the cytoplasm. The enzyme catalyses [thioredoxin]-dithiol + NADP(+) = [thioredoxin]-disulfide + NADPH + H(+). In Borreliella burgdorferi (strain ATCC 35210 / DSM 4680 / CIP 102532 / B31) (Borrelia burgdorferi), this protein is Thioredoxin reductase (trxB).